A 327-amino-acid polypeptide reads, in one-letter code: AA9 family lytic polysaccharide monooxygenase B (327 aa).

A signal peptide spans 1–19; that stretch reads MKSFTATALAALLAQQAAA. Cu(2+)-binding residues include histidine 20 and histidine 98. An intrachain disulfide couples cysteine 68 to cysteine 192. O2-binding residues include histidine 178 and glutamine 187. A Cu(2+)-binding site is contributed by tyrosine 189. Residues 264–280 show a composition bias toward low complexity; that stretch reads SPTTSLTPPVSTSTPAP. Residues 264–284 are disordered; it reads SPTTSLTPPVSTSTPAPGNGG. The CBM1 domain maps to 291–327; it reads CTVQKYGQCGGQGYTGCTTCAAGSTCNTTNQWYHQCV. N-linked (GlcNAc...) asparagine glycosylation is present at asparagine 317.

Belongs to the polysaccharide monooxygenase AA9 family. The cofactor is Cu(2+).

It localises to the secreted. It carries out the reaction [(1-&gt;4)-beta-D-glucosyl]n+m + reduced acceptor + O2 = 4-dehydro-beta-D-glucosyl-[(1-&gt;4)-beta-D-glucosyl]n-1 + [(1-&gt;4)-beta-D-glucosyl]m + acceptor + H2O.. Its function is as follows. Lytic polysaccharide monooxygenase (LPMO) that depolymerizes crystalline and amorphous polysaccharides via the oxidation of scissile alpha- or beta-(1-4)-glycosidic bonds, yielding C1 or C4 oxidation products. Catalysis by LPMOs requires the reduction of the active-site copper from Cu(II) to Cu(I) by a reducing agent and H(2)O(2) or O(2) as a cosubstrate. The sequence is that of AA9 family lytic polysaccharide monooxygenase B (LPMO9B) from Podospora anserina (strain S / ATCC MYA-4624 / DSM 980 / FGSC 10383) (Pleurage anserina).